We begin with the raw amino-acid sequence, 375 residues long: Histidine biosynthesis bifunctional protein HisB (375 aa).

Positions 1–168 are histidinol-phosphatase; it reads MTPILFVDRD…GIAHELADAP (168 aa). Catalysis depends on Asp-8, which acts as the Nucleophile. Asp-8, Asp-10, and Asp-128 together coordinate Mg(2+). Asp-10 (proton donor) is an active-site residue. Residues 169-375 form an imidazoleglycerol-phosphate dehydratase region; the sequence is RRALVQRNTK…TALPTTKGTL (207 aa).

In the N-terminal section; belongs to the histidinol-phosphatase family. It in the C-terminal section; belongs to the imidazoleglycerol-phosphate dehydratase family. Requires Mg(2+) as cofactor.

The protein localises to the cytoplasm. It carries out the reaction D-erythro-1-(imidazol-4-yl)glycerol 3-phosphate = 3-(imidazol-4-yl)-2-oxopropyl phosphate + H2O. It catalyses the reaction L-histidinol phosphate + H2O = L-histidinol + phosphate. Its pathway is amino-acid biosynthesis; L-histidine biosynthesis; L-histidine from 5-phospho-alpha-D-ribose 1-diphosphate: step 6/9. It functions in the pathway amino-acid biosynthesis; L-histidine biosynthesis; L-histidine from 5-phospho-alpha-D-ribose 1-diphosphate: step 8/9. The chain is Histidine biosynthesis bifunctional protein HisB from Xanthomonas axonopodis pv. citri (strain 306).